The primary structure comprises 196 residues: ATP-dependent Clp protease proteolytic subunit (196 aa).

Ser-96 functions as the Nucleophile in the catalytic mechanism. The active site involves His-121.

This sequence belongs to the peptidase S14 family. As to quaternary structure, fourteen ClpP subunits assemble into 2 heptameric rings which stack back to back to give a disk-like structure with a central cavity, resembling the structure of eukaryotic proteasomes.

It localises to the cytoplasm. The enzyme catalyses Hydrolysis of proteins to small peptides in the presence of ATP and magnesium. alpha-casein is the usual test substrate. In the absence of ATP, only oligopeptides shorter than five residues are hydrolyzed (such as succinyl-Leu-Tyr-|-NHMec, and Leu-Tyr-Leu-|-Tyr-Trp, in which cleavage of the -Tyr-|-Leu- and -Tyr-|-Trp bonds also occurs).. Cleaves peptides in various proteins in a process that requires ATP hydrolysis. Has a chymotrypsin-like activity. Plays a major role in the degradation of misfolded proteins. The chain is ATP-dependent Clp protease proteolytic subunit from Streptococcus suis (strain 98HAH33).